The sequence spans 669 residues: NAD-dependent malic enzyme, mitochondrial (669 aa).

Over residues 33-43 (IQQSRLYSSNT) the composition is skewed to polar residues. A disordered region spans residues 33–68 (IQQSRLYSSNTRSHKATTTRENTFQKPYSDEEVTKT). Residue Arg142 coordinates fumarate. Residue Tyr187 is the Proton donor of the active site. Catalysis depends on Lys259, which acts as the Proton acceptor. A divalent metal cation contacts are provided by Glu330, Asp331, and Asp354. Positions 387 and 390 each coordinate NAD(+). The (S)-malate site is built by Asn499 and Asn539.

The protein belongs to the malic enzymes family. Mg(2+) serves as cofactor. It depends on Mn(2+) as a cofactor.

Its subcellular location is the mitochondrion matrix. It catalyses the reaction (S)-malate + NAD(+) = pyruvate + CO2 + NADH. The catalysed reaction is oxaloacetate + H(+) = pyruvate + CO2. In terms of biological role, NAD-dependent mitochondrial malic enzyme that catalyzes the oxidative decarboxylation of malate to pyruvate. This is NAD-dependent malic enzyme, mitochondrial (MAE1) from Saccharomyces cerevisiae (strain ATCC 204508 / S288c) (Baker's yeast).